A 449-amino-acid polypeptide reads, in one-letter code: MLDAPEQDPVDPGDPASPPHGEAEQPLPGPRWPRALRASATRRALLLTALGGLLIAGLVTAIPAVGRAPERLAGYIASNPVPSTGAKINASFNRVASGDCLMWPDGTPESAAIVSCADEHRFEVAESIDMRTFPGMEYGQNAAPPSPARIQQISEEQCEAAVRRYLGTKFDPNSKFTISMLWPGDRAWRQAGERRMLCGLQSPGPNNQQLAFKGKVADIDQSKVWPAGTCLGIDATTNQPIDVPVDCAAPHAMEVSGTVNLAERFPDALPSEPEQDGFIKDACTRMTDAYLAPLKLRTTTLTLIYPTLTLPSWSAGSRVVACSIGATLGNGGWATLVNSAKGALLINGQPPVPPPDIPEERLNLPPIPLQLPTPRPAPPAQQLPSTPPGTQHLPAQQPVVTPTRPPESHAPASAAPAETQPPPPDAGAPPATQSPEATPPGPAEPAPAG.

Acidic residues predominate over residues 1-11; it reads MLDAPEQDPVD. The interval 1–33 is disordered; it reads MLDAPEQDPVDPGDPASPPHGEAEQPLPGPRWP. The helical transmembrane segment at 45-65 threads the bilayer; that stretch reads LLLTALGGLLIAGLVTAIPAV. Positions 349–449 are disordered; it reads QPPVPPPDIP…PGPAEPAPAG (101 aa). Residues 365 to 387 are compositionally biased toward pro residues; the sequence is PPIPLQLPTPRPAPPAQQLPSTP. Over residues 409–418 the composition is skewed to low complexity; that stretch reads HAPASAAPAE. A compositionally biased stretch (pro residues) spans 437–449; it reads ATPPGPAEPAPAG.

Its subcellular location is the cell membrane. It localises to the secreted. Its function is as follows. May play a role in septum formation. This is an uncharacterized protein from Mycobacterium tuberculosis (strain CDC 1551 / Oshkosh).